Reading from the N-terminus, the 177-residue chain is Cytoglobin-1 (177 aa).

One can recognise a Globin domain in the interval 16-165; it reads PLTDKERVMI…LCCSIKAVYE (150 aa). Heme b is bound by residues His79 and His111.

Belongs to the globin family. Monomeric.

It is found in the cytoplasm. The protein localises to the nucleus. It catalyses the reaction Fe(II)-heme b-[protein] + nitric oxide + O2 = Fe(III)-heme b-[protein] + nitrate. It carries out the reaction Fe(III)-heme b-[protein] + nitric oxide + H2O = Fe(II)-heme b-[protein] + nitrite + 2 H(+). The enzyme catalyses 2 superoxide + 2 H(+) = H2O2 + O2. The catalysed reaction is H2O2 + AH2 = A + 2 H2O. Its function is as follows. Probable multifunctional globin with a hexacoordinated heme iron required for the catalysis of various reactions depending on redox condition of the cell as well as oxygen availability. Has a nitric oxide dioxygenase (NOD) activity and is most probably involved in cell-mediated and oxygen-dependent nitric oxide consumption. Under normoxic conditions functions as a nitric oxide dioxygenase (NOD) but under hypoxic conditions the globin may switch its function to that of a nitrite (NO2) reductase (NiR), generating nitric oxide. Could also have peroxidase and superoxide dismutase activities, detoxifying reactive oxygen species and protecting cells against oxidative stress. Also binds dioxygen with low affinity and could function as an oxygen sensor but has probably no function as a respiratory oxygen carrier. The chain is Cytoglobin-1 from Oryzias latipes (Japanese rice fish).